The primary structure comprises 284 residues: RNase adapter protein RapZ (284 aa).

Residue 8–15 coordinates ATP; that stretch reads GRSGSGKS. 56–59 contacts GTP; sequence DVRN. The interval 266 to 284 is RNA-binding; the sequence is RSRGKNVQSRHRTLEKRKT.

It belongs to the RapZ-like family. RapZ subfamily. As to quaternary structure, homotrimer.

Modulates the synthesis of GlmS, by affecting the processing and stability of the regulatory small RNA GlmZ. When glucosamine-6-phosphate (GlcN6P) concentrations are high in the cell, RapZ binds GlmZ and targets it to cleavage by RNase E. Consequently, GlmZ is inactivated and unable to activate GlmS synthesis. Under low GlcN6P concentrations, RapZ is sequestered and inactivated by an other regulatory small RNA, GlmY, preventing GlmZ degradation and leading to synthesis of GlmS. This chain is RNase adapter protein RapZ, found in Citrobacter koseri (strain ATCC BAA-895 / CDC 4225-83 / SGSC4696).